Reading from the N-terminus, the 95-residue chain is Large ribosomal subunit protein uL23 (95 aa).

This sequence belongs to the universal ribosomal protein uL23 family. In terms of assembly, part of the 50S ribosomal subunit. Contacts protein L29, and trigger factor when it is bound to the ribosome.

Functionally, one of the early assembly proteins it binds 23S rRNA. One of the proteins that surrounds the polypeptide exit tunnel on the outside of the ribosome. Forms the main docking site for trigger factor binding to the ribosome. The chain is Large ribosomal subunit protein uL23 from Pediococcus pentosaceus (strain ATCC 25745 / CCUG 21536 / LMG 10740 / 183-1w).